The following is a 109-amino-acid chain: Envelope small membrane protein (109 aa).

Topologically, residues 1 to 11 (MTNLLNKSLEE) are virion surface. Residues 12-32 (NGSFLTAVYIFVGFVALYLLG) form a helical membrane-spanning segment. Over 33 to 109 (RALQAFVQAA…QDVQRNKLYS (77 aa)) the chain is Intravirion. Residues 89 to 109 (NGWNNKNPANFQDVQRNKLYS) are disordered. The span at 90–109 (GWNNKNPANFQDVQRNKLYS) shows a compositional bias: polar residues.

It belongs to the gammacoronaviruses E protein family. As to quaternary structure, homooligomer. Interacts with the M membrane protein in the budding compartment of the host cell, which is located between endoplasmic reticulum and the Golgi complex. The cytoplasmic tails of both proteins are important for this function. Interacts with Nucleoprotein.

The protein resides in the host Golgi apparatus membrane. Functionally, plays a central role in virus morphogenesis and assembly. Acts as a viroporin and self-assembles in host membranes forming pentameric protein-lipid pores that allow ion transport. Also plays a role in the induction of apoptosis. The polypeptide is Envelope small membrane protein (Avian infectious bronchitis virus (strain KB8523) (IBV)).